Here is a 360-residue protein sequence, read N- to C-terminus: Heat-inducible transcription repressor HrcA (360 aa).

The protein belongs to the HrcA family.

In terms of biological role, negative regulator of class I heat shock genes (grpE-dnaK-dnaJ and groELS operons). Prevents heat-shock induction of these operons. In Streptococcus thermophilus (strain CNRZ 1066), this protein is Heat-inducible transcription repressor HrcA.